Here is a 66-residue protein sequence, read N- to C-terminus: Large ribosomal subunit protein bL33c (66 aa).

This sequence belongs to the bacterial ribosomal protein bL33 family.

Its subcellular location is the plastid. The protein resides in the chloroplast. The sequence is that of Large ribosomal subunit protein bL33c from Oryza nivara (Indian wild rice).